The chain runs to 545 residues: ATP synthase subunit alpha (545 aa).

173-180 contacts ATP; sequence GDRKTGKT.

It belongs to the ATPase alpha/beta chains family. F-type ATPases have 2 components, CF(1) - the catalytic core - and CF(0) - the membrane proton channel. CF(1) has five subunits: alpha(3), beta(3), gamma(1), delta(1), epsilon(1). CF(0) has three main subunits: a(1), b(2) and c(9-12). The alpha and beta chains form an alternating ring which encloses part of the gamma chain. CF(1) is attached to CF(0) by a central stalk formed by the gamma and epsilon chains, while a peripheral stalk is formed by the delta and b chains.

The protein resides in the cell membrane. It catalyses the reaction ATP + H2O + 4 H(+)(in) = ADP + phosphate + 5 H(+)(out). Produces ATP from ADP in the presence of a proton gradient across the membrane. The alpha chain is a regulatory subunit. The polypeptide is ATP synthase subunit alpha (Renibacterium salmoninarum (strain ATCC 33209 / DSM 20767 / JCM 11484 / NBRC 15589 / NCIMB 2235)).